Consider the following 323-residue polypeptide: Porphobilinogen deaminase (323 aa).

At cysteine 251 the chain carries S-(dipyrrolylmethanemethyl)cysteine.

Belongs to the HMBS family. As to quaternary structure, monomer. The cofactor is dipyrromethane.

It carries out the reaction 4 porphobilinogen + H2O = hydroxymethylbilane + 4 NH4(+). It participates in porphyrin-containing compound metabolism; protoporphyrin-IX biosynthesis; coproporphyrinogen-III from 5-aminolevulinate: step 2/4. It functions in the pathway porphyrin-containing compound metabolism; chlorophyll biosynthesis. Its function is as follows. Tetrapolymerization of the monopyrrole PBG into the hydroxymethylbilane pre-uroporphyrinogen in several discrete steps. The protein is Porphobilinogen deaminase (hemC) of Nostoc sp. (strain PCC 7120 / SAG 25.82 / UTEX 2576).